A 307-amino-acid chain; its full sequence is Cuticle collagen 36 (307 aa).

Disordered stretches follow at residues 76 to 102 (TRSRRDAGYKEGSGSGGSGSGGYGGPT) and 116 to 307 (QQGP…PPGY). Residues 86–102 (EGSGSGGSGSGGYGGPT) are compositionally biased toward gly residues. Triple-helical region stretches follow at residues 89–105 (GSGGSGSGGYGGPTGAG), 118–150 (GPAGPPGPAGDTGPNGNDGHHGAPGVPGKEGSI), 167–187 (GPQGAVGQQGPKGPPGPKGKS), 194–226 (GKNGEPGMIGPPGPPGGVGEPGPPGPAGQPGRV), 231–257 (GAAGPAGPRGVKGPPGPKGLPGIAGLT), and 260–295 (GGQGPPGDAGGPGPVGGQGPPGPQGPQGPPGDEGSC). Positions 157–168 (PSEPCIICPPGP) are enriched in pro residues. Residues 186 to 196 (KSQERAADGKN) are compositionally biased toward basic and acidic residues. Residues 202–220 (IGPPGPPGGVGEPGPPGPA) are compositionally biased toward pro residues. The span at 231–242 (GAAGPAGPRGVK) shows a compositional bias: low complexity. Gly residues predominate over residues 258–278 (EIGGQGPPGDAGGPGPVGGQG). Residues 279 to 288 (PPGPQGPQGP) are compositionally biased toward pro residues.

This sequence belongs to the cuticular collagen family. Collagen polypeptide chains are complexed within the cuticle by disulfide bonds and other types of covalent cross-links.

Its function is as follows. Nematode cuticles are composed largely of collagen-like proteins. The cuticle functions both as an exoskeleton and as a barrier to protect the worm from its environment. The chain is Cuticle collagen 36 (col-36) from Caenorhabditis elegans.